The following is a 96-amino-acid chain: Protein Vpr (96 aa).

Residues 1 to 42 (MEQAPEDQGPQREPYHEWTLELLEELKNEAVRHFPRPWLHGL) form a homooligomerization region. 3 positions are modified to phosphoserine; by host: Ser-79, Ser-94, and Ser-96.

This sequence belongs to the HIV-1 VPR protein family. As to quaternary structure, homooligomer, may form homodimer. Interacts with p6-gag region of the Pr55 Gag precursor protein through a (Leu-X-X)4 motif near the C-terminus of the P6gag protein. Interacts with host UNG. May interact with host RAD23A/HHR23A. Interacts with host VPRBP/DCAF1, leading to hijack the CUL4A-RBX1-DDB1-DCAF1/VPRBP complex, mediating ubiquitination of host proteins such as TERT and ZGPAT and arrest of the cell cycle in G2 phase. Post-translationally, phosphorylated on several residues by host. These phosphorylations regulate VPR activity for the nuclear import of the HIV-1 pre-integration complex.

The protein resides in the virion. It localises to the host nucleus. The protein localises to the host extracellular space. Its function is as follows. During virus replication, may deplete host UNG protein, and incude G2-M cell cycle arrest. Acts by targeting specific host proteins for degradation by the 26S proteasome, through association with the cellular CUL4A-DDB1 E3 ligase complex by direct interaction with host VPRPB/DCAF-1. Cell cycle arrest reportedly occurs within hours of infection and is not blocked by antiviral agents, suggesting that it is initiated by the VPR carried into the virion. Additionally, VPR induces apoptosis in a cell cycle dependent manner suggesting that these two effects are mechanistically linked. Detected in the serum and cerebrospinal fluid of AIDS patient, VPR may also induce cell death to bystander cells. During virus entry, plays a role in the transport of the viral pre-integration (PIC) complex to the host nucleus. This function is crucial for viral infection of non-dividing macrophages. May act directly at the nuclear pore complex, by binding nucleoporins phenylalanine-glycine (FG)-repeat regions. This Homo sapiens (Human) protein is Protein Vpr.